Consider the following 398-residue polypeptide: Acetate kinase (398 aa).

A Mg(2+)-binding site is contributed by Asn7. ATP is bound at residue Lys14. Arg91 is a substrate binding site. Asp148 serves as the catalytic Proton donor/acceptor. Residues 208-212 (HLGNG), 283-285 (DFR), and 331-335 (GIGEH) each bind ATP. Residue Glu386 coordinates Mg(2+).

It belongs to the acetokinase family. Homodimer. It depends on Mg(2+) as a cofactor. The cofactor is Mn(2+).

The protein resides in the cytoplasm. It catalyses the reaction acetate + ATP = acetyl phosphate + ADP. It functions in the pathway metabolic intermediate biosynthesis; acetyl-CoA biosynthesis; acetyl-CoA from acetate: step 1/2. Its function is as follows. Catalyzes the formation of acetyl phosphate from acetate and ATP. Can also catalyze the reverse reaction. This is Acetate kinase from Clostridium botulinum (strain Eklund 17B / Type B).